A 309-amino-acid chain; its full sequence is Serine/threonine-protein phosphatase 2A catalytic subunit beta isoform (309 aa).

Mn(2+) is bound by residues D57, H59, D85, and N117. The active-site Proton donor is H118. Positions 167 and 241 each coordinate Mn(2+). Phosphotyrosine is present on Y307. A Leucine methyl ester modification is found at L309.

The protein belongs to the PPP phosphatase family. PP-1 subfamily. Found in a complex with at least ARL2, PPP2CB, PPP2R1A, PPP2R2A, PPP2R5E and TBCD. Interacts with TBCD. PP2A consists of a common heterodimeric core enzyme (composed of a 36 kDa catalytic subunit (subunit C) and a 65 kDa constant regulatory subunit (PR65) (subunit A)) that associates with a variety of regulatory subunits. Proteins that associate with the core dimer include three families of regulatory subunits B (the R2/B/PR55/B55, R3/B''/PR72/PR130/PR59 and R5/B'/B56 families), the 48 kDa variable regulatory subunit, viral proteins, and cell signaling molecules. Binds PPME1. May indirectly interact with SGO1, most probably through regulatory B56 subunits. Interacts with CTTNBP2NL. Interacts with PTPA. Part of the core of STRIPAK complexes composed of PP2A catalytic and scaffolding subunits, the striatins (PP2A regulatory subunits), the striatin-associated proteins MOB4, STRIP1 and STRIP2, PDCD10 and members of the STE20 kinases, such as STK24 and STK26. It depends on Mn(2+) as a cofactor. In terms of processing, reversibly methyl esterified on Leu-309 by leucine carboxyl methyltransferase 1 (Lcmt1) and protein phosphatase methylesterase 1 (PPME1). Carboxyl methylation influences the affinity of the catalytic subunit for the different regulatory subunits, thereby modulating the PP2A holoenzyme's substrate specificity, enzyme activity and cellular localization. Post-translationally, phosphorylation of either threonine (by autophosphorylation-activated protein kinase) or tyrosine results in inactivation of the phosphatase. Auto-dephosphorylation has been suggested as a mechanism for reactivation. May be monoubiquitinated by NOSIP.

It is found in the cytoplasm. The protein localises to the nucleus. The protein resides in the chromosome. It localises to the centromere. Its subcellular location is the cytoskeleton. It is found in the spindle pole. The enzyme catalyses O-phospho-L-seryl-[protein] + H2O = L-seryl-[protein] + phosphate. It catalyses the reaction O-phospho-L-threonyl-[protein] + H2O = L-threonyl-[protein] + phosphate. Functionally, catalytic subunit of protein phosphatase 2A (PP2A), a serine/threonine phosphatase involved in the regulation of a wide variety of enzymes, signal transduction pathways, and cellular events. PP2A can modulate the activity of phosphorylase B kinase, casein kinase 2, mitogen-stimulated S6 kinase, and MAP-2 kinase. Part of the striatin-interacting phosphatase and kinase (STRIPAK) complexes. STRIPAK complexes have critical roles in protein (de)phosphorylation and are regulators of multiple signaling pathways including Hippo, MAPK, nuclear receptor and cytoskeleton remodeling. Different types of STRIPAK complexes are involved in a variety of biological processes such as cell growth, differentiation, apoptosis, metabolism and immune regulation. This is Serine/threonine-protein phosphatase 2A catalytic subunit beta isoform (PPP2CB) from Oryctolagus cuniculus (Rabbit).